The chain runs to 226 residues: Translation initiation factor 6 (226 aa).

The protein belongs to the eIF-6 family.

Its function is as follows. Binds to the 50S ribosomal subunit and prevents its association with the 30S ribosomal subunit to form the 70S initiation complex. The polypeptide is Translation initiation factor 6 (Haloquadratum walsbyi (strain DSM 16790 / HBSQ001)).